The primary structure comprises 198 residues: MLYPTPIAKLIDSYSKLPGIGIKTATRLAFYTIGMSADDVNEFAKNLLSAKRELTYCSICGRLTDDDPCSICTDPTRDQTTILVLEDSRDVAAMENIQEYHGLYHVLHGLISPMNGISPDDINLKSLMTRLMDSEVSEVIVATNATADGEATSMYLSRLLKPAGIKVTRLARGLAVGADIEYADEVTLLRAIENRTEL.

The C4-type zinc-finger motif lies at 57–72 (CSICGRLTDDDPCSIC). A Toprim domain is found at 80–175 (TTILVLEDSR…KVTRLARGLA (96 aa)).

The protein belongs to the RecR family.

In terms of biological role, may play a role in DNA repair. It seems to be involved in an RecBC-independent recombinational process of DNA repair. It may act with RecF and RecO. The chain is Recombination protein RecR from Streptococcus pneumoniae serotype 2 (strain D39 / NCTC 7466).